Consider the following 346-residue polypeptide: Phenylalanine--tRNA ligase alpha subunit (346 aa).

Glu-262 serves as a coordination point for Mg(2+).

It belongs to the class-II aminoacyl-tRNA synthetase family. Phe-tRNA synthetase alpha subunit type 1 subfamily. As to quaternary structure, tetramer of two alpha and two beta subunits. Mg(2+) serves as cofactor.

It is found in the cytoplasm. It catalyses the reaction tRNA(Phe) + L-phenylalanine + ATP = L-phenylalanyl-tRNA(Phe) + AMP + diphosphate + H(+). This chain is Phenylalanine--tRNA ligase alpha subunit, found in Ehrlichia chaffeensis (strain ATCC CRL-10679 / Arkansas).